The primary structure comprises 412 residues: BSD domain-containing protein 1 (412 aa).

Residues 145–197 enclose the BSD domain; sequence WLSTFSLEERKAEISELLVSSPAIRALYTKMVPAAVAHAEFWQRYFYKVFQLE. Positions 208–217 are enriched in basic and acidic residues; the sequence is QRAEQTDHSE. 3 disordered regions span residues 208–227, 253–272, and 298–412; these read QRAE…EDEE, VTVA…ASLS, and ESVT…ENWE. Polar residues-rich tracts occupy residues 259 to 272 and 298 to 308; these read PESS…ASLS and ESVTIRVTQPS. The residue at position 308 (serine 308) is a Phosphoserine. A compositionally biased stretch (basic and acidic residues) spans 328 to 349; sequence PEERPAPREETAREDMAQDLRV. Residues 353–372 are compositionally biased toward polar residues; sequence NSDSGKSTPSNNGKKGSSTD. Acidic residues-rich tracts occupy residues 373–390 and 400–412; these read VSED…EEEV and TEEL…ENWE.

The chain is BSD domain-containing protein 1 (bsdc1) from Danio rerio (Zebrafish).